The sequence spans 627 residues: Glucokinase regulatory protein (627 aa).

SIS domains follow at residues 90-286 and 320-499; these read VQEV…QGVV and VGIS…LLGK. Residues 109–110, E153, and 179–181 contribute to the beta-D-fructose 1-phosphate site; these read TS and SVG. 109 to 110 provides a ligand contact to beta-D-fructose 6-phosphate; sequence TS. Position 179–181 (179–181) interacts with beta-D-fructose 6-phosphate; it reads SVG. The interval 199–200 is important for interaction with GCK; the sequence is AV. E348 is a binding site for beta-D-fructose 1-phosphate. Residues 463-465 are essential for interaction with GCK; it reads LLF. Position 514 (K514) interacts with beta-D-fructose 1-phosphate. Beta-D-fructose 6-phosphate is bound at residue K514.

It belongs to the GCKR family. In terms of assembly, interacts (fructose 6-phosphate bound form) with GCK. As to expression, detected in liver (at protein level). Not detected in muscle, brain, heart, testis, intestine or spleen.

It is found in the cytoplasm. The protein localises to the nucleus. Its subcellular location is the mitochondrion. Functionally, regulates glucokinase (GCK) by forming an inactive complex with this enzyme. Acts by promoting GCK recruitment to the nucleus, possibly to provide a reserve of GCK that can be quickly released in the cytoplasm after a meal. The affinity of GCKR for GCK is modulated by fructose metabolites: GCKR with bound fructose 6-phosphate has increased affinity for GCK, while GCKR with bound fructose 1-phosphate has strongly decreased affinity for GCK and does not inhibit GCK activity. This is Glucokinase regulatory protein from Rattus norvegicus (Rat).